The primary structure comprises 244 residues: Tetraspanin-7 (244 aa).

Topologically, residues 1–11 (METKPVITCLK) are cytoplasmic. Residues 12–35 (TLLIIYSFVFWITGVILLAVGVWG) traverse the membrane as a helical segment. Over 36–51 (KLTLGTYISLIAENST) the chain is Extracellular. The N-linked (GlcNAc...) asparagine glycan is linked to N49. The helical transmembrane segment at 52-70 (NAPYVLIGTGTTIVVFGLF) threads the bilayer. Over 71–81 (GCFATCRGSPW) the chain is Cytoplasmic. A helical transmembrane segment spans residues 82-107 (MLKLYAMFLSLVFLAELVAGISGFVF). Residues 108–208 (RHEIKDTFLR…LVTSFMETNM (101 aa)) are Extracellular-facing. N-linked (GlcNAc...) asparagine glycans are attached at residues N150, N153, N172, and N183. A helical membrane pass occupies residues 209 to 229 (GIIAGVAFGIAFSQLIGMLLA). The Cytoplasmic segment spans residues 230-244 (CCLSRFITANQYEMV).

It belongs to the tetraspanin (TM4SF) family.

Its subcellular location is the membrane. Functionally, may be involved in cell proliferation and cell motility. In Pan troglodytes (Chimpanzee), this protein is Tetraspanin-7 (TSPAN7).